The following is a 521-amino-acid chain: 2-isopropylmalate synthase (521 aa).

One can recognise a Pyruvate carboxyltransferase domain in the interval 12–274 (VIIFDTTLRD…WNKIDTTMLT (263 aa)). The Mn(2+) site is built by Asp21, His209, His211, and Asn245. Positions 398 to 521 (KLLSLTVIAG…DLPVPEAAAS (124 aa)) are regulatory domain.

Belongs to the alpha-IPM synthase/homocitrate synthase family. LeuA type 1 subfamily. As to quaternary structure, homodimer. Mn(2+) is required as a cofactor.

Its subcellular location is the cytoplasm. The catalysed reaction is 3-methyl-2-oxobutanoate + acetyl-CoA + H2O = (2S)-2-isopropylmalate + CoA + H(+). The protein operates within amino-acid biosynthesis; L-leucine biosynthesis; L-leucine from 3-methyl-2-oxobutanoate: step 1/4. Catalyzes the condensation of the acetyl group of acetyl-CoA with 3-methyl-2-oxobutanoate (2-ketoisovalerate) to form 3-carboxy-3-hydroxy-4-methylpentanoate (2-isopropylmalate). The sequence is that of 2-isopropylmalate synthase from Rhodopseudomonas palustris (strain BisB18).